A 159-amino-acid polypeptide reads, in one-letter code: Probable metallophosphoesterase MPN_126 (159 aa).

Residues Asp-9, His-11, Asp-34, Asn-53, His-75, His-107, and His-109 each coordinate Mn(2+).

This sequence belongs to the metallophosphoesterase superfamily. YfcE family. Mn(2+) serves as cofactor.

The protein is Probable metallophosphoesterase MPN_126 of Mycoplasma pneumoniae (strain ATCC 29342 / M129 / Subtype 1) (Mycoplasmoides pneumoniae).